We begin with the raw amino-acid sequence, 78 residues long: Protein M6 (78 aa).

Belongs to the A9/FIL1 family. As to expression, tapetum of anthers.

It is found in the secreted. This chain is Protein M6 (M6), found in Lilium henryi (Henry's lily).